Consider the following 967-residue polypeptide: MDDIPTLLARTLNPTTSKSAEEALKVWELQDSSFALKLLNIVAEDTVDINIKLAASLYFKNYIKKHWDSEEGASIRISDEVAELIKREIINLMLKSTTIIQVQLGEVIGYIANFDFPDRWDTLLPDLISKLSAVDMNTNIAVLSTAHAIFKRWRPLFRSDALFLEIKYVLDRFCEPFLALFVQTNNLLRNGPQDAESLNSLFQVILLECKLFYDLNCQDIPEFFEDHMSEFMTAFLNYFTYTNPSLEGDEGETNVLIKVKASICEIVELYTLRYEEVFTMLYDFVNVTWTLLTTLTPDEKYDGLVGKAMAFLTSVIRIRKHAEFFQQDQVLQQFIELVVLPNICLRESDEELFEDDPLEYVRRDLEGSNSDSRARSAIVLVRGLLDHFDQKITSVVSTHINANLQQFSTNPSLEWNKKYVALQLFSAIAIKGQSTRLGVTSINLMVDVVAFFENNIKPDLLQPAGVIHPMVLAEDIKYVFTFRNQLNSQQLIDIFPTILRFLEMPSFVVYTYAAIALDQLLTVRHNHVHIFTSLLIAPHILPALNQLFLIVESASTPQKLAENDYLMKAVMRIIIMSQEAILPAASLLLQHLTKITEEVSKNPSNPKFNHYLFESIGALIRSLSKSGPQTVSQLENALLPVFQNVLIEDVTEFIPYVLQLLSQLVEASGNEPLPDFVVNLIQPCLSPALWDSKGNIPALVRLLRAMIFRGPQIFISNKFVEPVLGIFQKLISSKVNDHFGFDLLDRVFTVFNANILAPYINHIFFLLLSRLKNSRTERFVLRCTIFFFFVASEQTGTCGPDNLIQGVDAVQSGVFGQLMTSIILPQAQKLALPLDRKISALGLLRLLTCDLVLAPDAIYENLIIPLLTCILKLFEMPIEQAQTDADEELFMDEIDADSMSFQASFSRLATTGGKRVDPFPQITDLKQYCATEMNLANRNMGGRLSQIISTHLPGDGQSVLQSYGYVI.

The Importin N-terminal domain occupies 20–95 (AEEALKVWEL…KREIINLMLK (76 aa)).

This sequence belongs to the XPO2/CSE1 family. As to quaternary structure, binds with high affinity to importin-alpha only in the presence of RanGTP.

It is found in the cytoplasm. The protein resides in the nucleus envelope. In terms of biological role, export receptor for importin alpha. Mediates importin-alpha re-export from the nucleus to the cytoplasm after import substrates have been released into the nucleoplasm. This Schizosaccharomyces pombe (strain 972 / ATCC 24843) (Fission yeast) protein is Importin-alpha re-exporter (kap109).